Reading from the N-terminus, the 348-residue chain is Chitinase (348 aa).

Residues 1–29 form the signal peptide; that stretch reads MKLKKIIPAFPLLSTVAVGLWLTPTQASA. The region spanning 42 to 348 is the GH18 domain; the sequence is KVLVGYWHNW…FATRYSNLVK (307 aa). Glutamate 161 serves as the catalytic Proton donor.

The protein belongs to the glycosyl hydrolase 18 family.

The protein localises to the secreted. The catalysed reaction is Random endo-hydrolysis of N-acetyl-beta-D-glucosaminide (1-&gt;4)-beta-linkages in chitin and chitodextrins.. It participates in glycan degradation; chitin degradation. Involved in chitin degradation. Catalyzes the cleavage of glycosidic linkages in chitooligosaccharides and in alpha- and beta-chitin. Its activity on chitooligosaccharides increases considerably with degrees of polymerization (the initial rate of hydrolysis for GlcNAc5 is about 130-fold higher than that for GlcNAc3). Its activity is greatly stimulated in the presence of the lytic chitin monooxygenase EfCBM33A, which attacks the crystalline structure of chitin and makes the polymer more accessible to the chitinase; combining the two enzymes leads to rapid and complete depolymerization of crystalline chitin, especially with beta-chitin as a substrate. Is likely involved in a chitin degradation pathway that allows E.faecalis V583 to grow on chitin as a carbon source. The chain is Chitinase from Enterococcus faecalis (strain ATCC 700802 / V583).